The sequence spans 284 residues: MDAIKKKMQAMKLEKDNAMDRALLCEQQARDANIRAEKAEEEARSLQKKIQQIENDLDQTMEQLMQVNAKLDEKDKALQNAESEVAALNRRIQLLEEDLERSEERLATATAKLAEASQAADESERARKILESKGLADEERMDALENQLKEARFMAEEADKKYDEVARKLAMVEADLERAEERAETGESKIVELEEELRVVGNNLKSLEVSEEKANLREEEYKQQIKTLNTRLKEAEARAEFAERSVQKLQKEVDRLEDELVHEKEKYKYICDDLDMTFTELIGN.

Residues 1–284 are a coiled coil; sequence MDAIKKKMQA…DMTFTELIGN (284 aa).

This sequence belongs to the tropomyosin family. In terms of assembly, homodimer.

Tropomyosin, in association with the troponin complex, plays a central role in the calcium dependent regulation of muscle contraction. The chain is Tropomyosin from Blattella germanica (German cockroach).